The following is a 1634-amino-acid chain: Probable serine/threonine-protein kinase DDB_G0282895 (1634 aa).

Residues 40–63 (YKGNLNENKLKNGKGTFLFPNSIY) form an MORN 1 repeat. The tract at residues 84–131 (QKIQKKSSQSKSQQQPPSQTKKSSSPINLSPRLQGQNPTITTNGSNNN) is disordered. Low complexity predominate over residues 89 to 109 (KSSQSKSQQQPPSQTKKSSSP). Residues 110-119 (INLSPRLQGQ) are compositionally biased toward polar residues. A compositionally biased stretch (low complexity) spans 120 to 131 (NPTITTNGSNNN). An MORN 2 repeat occupies 169–191 (YNGKWINGKANGIGCFHFSKDDS). Low complexity-rich tracts occupy residues 273–292 (SNNNSNGTTSPTSPSILSPT) and 318–339 (SGSGFCSPSSSLSIKMSSPISS). Disordered stretches follow at residues 273–367 (SNNN…QQQQ), 658–750 (TTAT…TFSV), and 783–816 (SSILNNNNNNNNNNNNNNNNNNNNNNNNNNNCGQ). Polar residues predominate over residues 340-351 (GLQHSKTQPNVS). Composition is skewed to low complexity over residues 352 to 367 (QSQNQQIQQQQQQQQQ), 658 to 688 (TTATPNNNNNSSGNSKLTTTTHLTNNTTTTT), and 703 to 715 (PPSQSSSSSSPSS). Polar residues predominate over residues 716–732 (DQTNLPSIAISSSNGIS). Positions 787–813 (NNNNNNNNNNNNNNNNNNNNNNNNNNN) are enriched in low complexity. A helical membrane pass occupies residues 1255-1275 (IFIGFMELCVIDELCGFSFIY). The region spanning 1377-1634 (LQILQFLGEG…IIQKLCNHKC (258 aa)) is the Protein kinase domain. Residues 1383–1391 (LGEGALAEV) and K1404 contribute to the ATP site. Residue D1500 is the Proton acceptor of the active site.

The protein belongs to the protein kinase superfamily. TKL Ser/Thr protein kinase family.

Its subcellular location is the membrane. It catalyses the reaction L-seryl-[protein] + ATP = O-phospho-L-seryl-[protein] + ADP + H(+). It carries out the reaction L-threonyl-[protein] + ATP = O-phospho-L-threonyl-[protein] + ADP + H(+). The sequence is that of Probable serine/threonine-protein kinase DDB_G0282895 from Dictyostelium discoideum (Social amoeba).